The chain runs to 200 residues: 3-isopropylmalate dehydratase small subunit (200 aa).

The protein belongs to the LeuD family. LeuD type 1 subfamily. As to quaternary structure, heterodimer of LeuC and LeuD.

The enzyme catalyses (2R,3S)-3-isopropylmalate = (2S)-2-isopropylmalate. Its pathway is amino-acid biosynthesis; L-leucine biosynthesis; L-leucine from 3-methyl-2-oxobutanoate: step 2/4. Its function is as follows. Catalyzes the isomerization between 2-isopropylmalate and 3-isopropylmalate, via the formation of 2-isopropylmaleate. This chain is 3-isopropylmalate dehydratase small subunit, found in Saccharopolyspora erythraea (strain ATCC 11635 / DSM 40517 / JCM 4748 / NBRC 13426 / NCIMB 8594 / NRRL 2338).